A 530-amino-acid polypeptide reads, in one-letter code: 3-oxo-5-alpha-steroid 4-dehydrogenase (530 aa).

An FAD-binding site is contributed by 33-62; it reads DVVVVGWGGAGASAAIEAREQGAEVLVIER. A helical transmembrane segment spans residues 395–415; the sequence is AWQCLFGGLWAFQSMPALALM.

The protein belongs to the FAD-dependent oxidoreductase 2 family. FAD is required as a cofactor.

The protein localises to the membrane. The catalysed reaction is a 3-oxo-5alpha-steroid + A = a 3-oxo-Delta(4)-steroid + AH2. The enzyme catalyses 5alpha-androstan-3,17-dione + A = androst-4-ene-3,17-dione + AH2. It carries out the reaction 5alpha-androst-1-ene-3,17-dione + A = androsta-1,4-diene-3,17-dione + AH2. Inhibition occurs with substrate concentrations above 25 uM. Functionally, involved in the degradation of steroids having an A:B ring fusion in a trans configuration. Catalyzes the elimination of hydrogens located at positions 4 and 5 and the introduction of double bonds into ring A. This Comamonas testosteroni (Pseudomonas testosteroni) protein is 3-oxo-5-alpha-steroid 4-dehydrogenase.